A 129-amino-acid chain; its full sequence is Small ribosomal subunit protein uS11 (129 aa).

It belongs to the universal ribosomal protein uS11 family. Part of the 30S ribosomal subunit. Interacts with proteins S7 and S18. Binds to IF-3.

Its function is as follows. Located on the platform of the 30S subunit, it bridges several disparate RNA helices of the 16S rRNA. Forms part of the Shine-Dalgarno cleft in the 70S ribosome. This chain is Small ribosomal subunit protein uS11, found in Synechococcus sp. (strain RCC307).